We begin with the raw amino-acid sequence, 780 residues long: MNPERSEYIEIPVLPLRDVVIYPYMVIPLFVGRDKSIKCIEASMNKNKKIMLVTQKEAEIDEPTDNDLFTIGTTASILQMLKLPDGTVKVLVEGLQRAKVKKINNENGYFTAQIQLICTPEITEKEQSILIRTTLNQFENYVKFNKKISPEILNSLNNITNASQLSDMIAIHMPLKLSEKQSILETYNTNERLERLMAIMESEIDLLQVEKRIRNRVKKQMEKSQREYYLNEQMKAIQKELGEMDETLDEHEILKRKITTIKMPKEAQEKMASELHKLKMMSPMSAEATVVRSYIDWMIQIPWNIRSKVKKNLTQAQKILDSDHFGLDKVKERILEYLAVQSRINTVKGPILCLVGPPGVGKTSLGQSIARATGRKYIRMALGGIRDEAEIRGHRRTYIGSMPGKIIQKMAKVGVKNPLFLLDEIDKMSCDIRVDPASALLEVLDPEQNVAFNDHYLEVDYDLSNVMFIATSNSTNIPAPLLDRMEIIRISGYTEFEKLNIAKSYLKPKQIKRNALKSNELTIEDSVVTNIIRYYTREAGVRNLERELSKICRKCVKNLILNKSLKKIKITTDNLHDYLGIKKYDFGKTNYKNQIGQVIGLAWTEVGGELLTIEAACISGKGKLIYTGSLGEVMQESIQAALTVVRSQANKLGIKKNFYEKNDIHVHVPEGATPKDGPSAGIAMCTAIVSCLTGIPVKSDIAMTGEITLRGQILTIGGLKEKLLAAHRGGIKKVLIPYDNEKDLQEIPKTILKGLFVHPVKHIKEVLNLSLENTPYFSSK.

The region spanning 11–204 (IPVLPLRDVV…RLMAIMESEI (194 aa)) is the Lon N-terminal domain. Residue 356–363 (GPPGVGKT) coordinates ATP. The region spanning 592-773 (KNQIGQVIGL…KEVLNLSLEN (182 aa)) is the Lon proteolytic domain. Active-site residues include Ser-679 and Lys-722.

Belongs to the peptidase S16 family. In terms of assembly, homohexamer. Organized in a ring with a central cavity.

Its subcellular location is the cytoplasm. It catalyses the reaction Hydrolysis of proteins in presence of ATP.. Functionally, ATP-dependent serine protease that mediates the selective degradation of mutant and abnormal proteins as well as certain short-lived regulatory proteins. Required for cellular homeostasis and for survival from DNA damage and developmental changes induced by stress. Degrades polypeptides processively to yield small peptide fragments that are 5 to 10 amino acids long. Binds to DNA in a double-stranded, site-specific manner. The polypeptide is Lon protease (Buchnera aphidicola subsp. Baizongia pistaciae (strain Bp)).